A 434-amino-acid chain; its full sequence is Transcription initiation factor IIE subunit alpha (434 aa).

One can recognise an HTH TFE/IIEalpha-type domain in the interval 8-99; sequence VQRLIKMIMR…DFCSTIDSIK (92 aa). The C4-type zinc-finger motif lies at 124-151; sequence CPFCNKKFSSLDVLSLVTNEGTFACNVC. Disordered stretches follow at residues 217 to 251, 357 to 408, and 415 to 434; these read QQNLSKSNSDVRLSTSSPSITVDFSADKETDEKRE, STDY…EMQE, and INGFNEDDEDDEDEADFEDV. A compositionally biased stretch (polar residues) spans 226–238; the sequence is DVRLSTSSPSITV. 2 stretches are compositionally biased toward basic and acidic residues: residues 241–251 and 376–385; these read SADKETDEKRE and IQNKRTKSIE. Over residues 386–399 the composition is skewed to polar residues; it reads ENNSLPPIVSTNGI. Residues 419–434 are compositionally biased toward acidic residues; the sequence is NEDDEDDEDEADFEDV.

The protein belongs to the TFIIE alpha subunit family. As to quaternary structure, TFIIE is a tetramer of two alpha (tfa1) and two beta (tfa2) subunits.

Its subcellular location is the nucleus. Its function is as follows. Recruits TFIIH to the initiation complex and stimulates the RNA polymerase II C-terminal domain kinase and DNA-dependent ATPase activities of TFIIH. Both TFIIH and TFIIE are required for promoter clearance by RNA polymerase. This is Transcription initiation factor IIE subunit alpha (tfa1) from Schizosaccharomyces pombe (strain 972 / ATCC 24843) (Fission yeast).